We begin with the raw amino-acid sequence, 197 residues long: Nascent polypeptide-associated complex subunit alpha (197 aa).

A compositionally biased stretch (basic and acidic residues) spans 1–18 (MTGSTETRHNEKDVKEPQ). A disordered region spans residues 1-30 (MTGSTETRHNEKDVKEPQVDSDADSDNEAI). Over residues 19–28 (VDSDADSDNE) the composition is skewed to acidic residues. In terms of domain architecture, NAC-A/B spans 58–123 (SRSEKKARKL…AKIEDLTQHA (66 aa)). The disordered stretch occupies residues 134–155 (TREAPQLKTVEEDDNEDVEEDS). Residues 144-155 (EEDDNEDVEEDS) are compositionally biased toward acidic residues. The UBA domain occupies 158–195 (IEEKDIELVISQANTTRNKAIRALKDADNDIVNAIMSL).

It belongs to the NAC-alpha family.

May promote appropriate targeting of ribosome-nascent polypeptide complexes. The sequence is that of Nascent polypeptide-associated complex subunit alpha from Caenorhabditis briggsae.